Consider the following 181-residue polypeptide: MGKIRLAVIGVSGRNKMDFNLLSKEMFDYMIDNVEAYIKYHLETSNDKIVLVSGGSAWADHSVVKLFLEKNFAGLELYLPTEFTNGKFKDSHQGSILNNLHKHFSEQIGENSLDQIFDCILDPNCKVSVHNGFFKRNTLIAEESDHVIAFTFDEKPKGGTLDTWNKIKHNNKLNINLSIYL.

This is an uncharacterized protein from Acanthamoeba polyphaga (Amoeba).